The chain runs to 360 residues: Probable neutral protease 2 homolog A (360 aa).

Residues 1–17 (MQFTALLAALGAPLALA) form the signal peptide. Positions 18 to 183 (ASIPAAAHNH…DDSTGVIDKR (166 aa)) are excised as a propeptide. Intrachain disulfides connect Cys191/Cys262, Cys269/Cys287, and Cys300/Cys360. An N-linked (GlcNAc...) asparagine glycan is attached at Asn205. Residue His311 participates in Zn(2+) binding. Glu312 is a catalytic residue. His315 and Asp326 together coordinate Zn(2+).

The protein belongs to the peptidase M35 family. Zn(2+) serves as cofactor.

It localises to the secreted. The enzyme catalyses Preferential cleavage of bonds with hydrophobic residues in P1'. Also 3-Asn-|-Gln-4 and 8-Gly-|-Ser-9 bonds in insulin B chain.. Its function is as follows. Probable secreted metalloprotease that shows high activities on basic nuclear substrates such as histone and protamine. May be involved in virulence. The polypeptide is Probable neutral protease 2 homolog A (NpII-A) (Trichophyton rubrum (Athlete's foot fungus)).